A 554-amino-acid chain; its full sequence is U4/U6 small nuclear ribonucleoprotein PRP4-like protein (554 aa).

Residues 48–65 (APIPMMPHPPVARPPTFR) are compositionally biased toward pro residues. A disordered region spans residues 48–99 (APIPMMPHPPVARPPTFRPPVSQNGGVKTSDSDSESDDEHIEISEESKQVRE). A compositionally biased stretch (basic and acidic residues) spans 88 to 99 (IEISEESKQVRE). 7 WD repeats span residues 253-292 (GDDR…NTIA), 296-335 (DHKE…LQTF), 337-376 (GHLD…ELLL), 379-418 (GHSR…SILV), 421-460 (GHIK…SLYI), 463-503 (AHAN…LVKS), and 506-545 (GHES…DEDE).

Its subcellular location is the nucleus speckle. In terms of biological role, participates in pre-mRNA splicing. Part of the U4/U5/U6 tri-snRNP complex, one of the building blocks of the spliceosome. Essential for reproduction. In female gametophyte, is necessary for the egg cell and central cell fate determination and hence reproductive success. Involved in a mechanism that prevents accessory cells from adopting gametic cell fate. Modulates egg cell signaling center that regulates the development of all female gametophytic cells. The polypeptide is U4/U6 small nuclear ribonucleoprotein PRP4-like protein (Arabidopsis thaliana (Mouse-ear cress)).